The primary structure comprises 834 residues: Putative COX1/OXI3 intron 1 protein (834 aa).

Residues 162-188 (MKDTNNTKGNTKSEGSTERGNSGVDRG) form a disordered region. The segment covering 167-181 (NTKGNTKSEGSTERG) has biased composition (polar residues). In terms of domain architecture, Reverse transcriptase spans 296–577 (LSNELGTGKF…TPARFLGYNI (282 aa)).

It is found in the mitochondrion. The chain is Putative COX1/OXI3 intron 1 protein (AI1) from Saccharomyces cerevisiae (strain ATCC 204508 / S288c) (Baker's yeast).